The following is a 348-amino-acid chain: 3-isopropylmalate dehydrogenase (348 aa).

Residue 76–87 (GPKWTDPNNRPE) participates in NAD(+) binding. Positions 94, 104, 132, and 217 each coordinate substrate. Positions 217, 241, and 245 each coordinate Mg(2+). NAD(+) is bound at residue 275-287 (GSAPDIAGKNVAN).

Belongs to the isocitrate and isopropylmalate dehydrogenases family. LeuB type 1 subfamily. In terms of assembly, homodimer. Mg(2+) serves as cofactor. Mn(2+) is required as a cofactor.

It is found in the cytoplasm. The catalysed reaction is (2R,3S)-3-isopropylmalate + NAD(+) = 4-methyl-2-oxopentanoate + CO2 + NADH. Its pathway is amino-acid biosynthesis; L-leucine biosynthesis; L-leucine from 3-methyl-2-oxobutanoate: step 3/4. Its function is as follows. Catalyzes the oxidation of 3-carboxy-2-hydroxy-4-methylpentanoate (3-isopropylmalate) to 3-carboxy-4-methyl-2-oxopentanoate. The product decarboxylates to 4-methyl-2 oxopentanoate. The polypeptide is 3-isopropylmalate dehydrogenase (Staphylococcus aureus (strain COL)).